Reading from the N-terminus, the 627-residue chain is BEL1-like homeodomain protein 4 (627 aa).

Residues 206–225 form a disordered region; it reads SSQHHHHQVVGHFGSSSSSP. A compositionally biased stretch (low complexity) spans 215 to 225; the sequence is VGHFGSSSSSP. The segment at 241 to 257 is SR/KY domain; sequence SKYTKPAQELLEEFCSV. A disordered region spans residues 263–307; that stretch reads KKNKLSRNNSNPNTTGGGGGGGSSSSAGTANDSPPLSPADRIEHQ. The tract at residues 302–373 is BELL domain; that stretch reads DRIEHQRRKV…CLKDAVAVQL (72 aa). A DNA-binding region (homeobox) is located at residues 424–486; that stretch reads AWRPQRGLPE…NARVRLWKPM (63 aa). Residues 494–530 are disordered; that stretch reads EAKEREEAEEENENQQQQRRQQQTNNNDTKPNNNENN. Residues 507–530 show a composition bias toward low complexity; that stretch reads NQQQQRRQQQTNNNDTKPNNNENN.

It belongs to the TALE/BELL homeobox family. May form heterodimeric complexes with TALE/KNOX proteins. Interacts with OFP1, OFP2 and OFP5. Interacts with KNATM, isoform KNATM-B. In terms of tissue distribution, expressed in lateral organs.

It localises to the nucleus. In terms of biological role, transcription factor that establishes leaf shape by repressing growth in specific subdomains of the leaf. Negatively regulates knox homeobox gene KNAT1/BP expression. This chain is BEL1-like homeodomain protein 4 (BLH4), found in Arabidopsis thaliana (Mouse-ear cress).